Reading from the N-terminus, the 258-residue chain is Acyl-[acyl-carrier-protein]--UDP-N-acetylglucosamine O-acyltransferase (258 aa).

It belongs to the transferase hexapeptide repeat family. LpxA subfamily. Homotrimer.

It localises to the cytoplasm. The enzyme catalyses a (3R)-hydroxyacyl-[ACP] + UDP-N-acetyl-alpha-D-glucosamine = a UDP-3-O-[(3R)-3-hydroxyacyl]-N-acetyl-alpha-D-glucosamine + holo-[ACP]. Its pathway is glycolipid biosynthesis; lipid IV(A) biosynthesis; lipid IV(A) from (3R)-3-hydroxytetradecanoyl-[acyl-carrier-protein] and UDP-N-acetyl-alpha-D-glucosamine: step 1/6. Its function is as follows. Involved in the biosynthesis of lipid A, a phosphorylated glycolipid that anchors the lipopolysaccharide to the outer membrane of the cell. The chain is Acyl-[acyl-carrier-protein]--UDP-N-acetylglucosamine O-acyltransferase from Pseudomonas fluorescens (strain SBW25).